The following is a 769-amino-acid chain: Discoidin, CUB and LCCL domain-containing protein 2 (769 aa).

Over residues 1 to 29 (MASRAPLRAARSPQDPGGRAAPAATGRAP) the composition is skewed to low complexity. A disordered region spans residues 1–39 (MASRAPLRAARSPQDPGGRAAPAATGRAPLPSAGWCPLP). An N-terminal signal peptide occupies residues 1-63 (MASRAPLRAA…LLLLLPDAGA (63 aa)). Topologically, residues 64 to 523 (QKGDGCGHTV…VTPSVTKDVA (460 aa)) are extracellular. Disulfide bonds link Cys-69-Cys-96 and Cys-123-Cys-145. The CUB domain occupies 69-184 (CGHTVLGPES…RGFLASYSVI (116 aa)). The N-linked (GlcNAc...) asparagine glycan is linked to Asn-92. A glycan (N-linked (GlcNAc...) asparagine) is linked at Asn-152. One can recognise an LCCL domain in the interval 184–282 (IDKQDLITCL…MVGYLSTSLF (99 aa)). Cys-212 and Cys-234 are disulfide-bonded. A glycan (N-linked (GlcNAc...) asparagine) is linked at Asn-269. A disulfide bridge links Cys-289 with Cys-446. The 158-residue stretch at 289 to 446 (CYGTLGMESG…IAMKVELLGC (158 aa)) folds into the F5/8 type C domain. The disordered stretch occupies residues 455-476 (PKLTQPPPPRNSNNLKNTTVHP). The segment covering 465–474 (NSNNLKNTTV) has biased composition (polar residues). N-linked (GlcNAc...) asparagine glycans are attached at residues Asn-471 and Asn-511. The chain crosses the membrane as a helical span at residues 524–544 (LAAVLVPVLVMALTTLILILV). At 545-769 (CAWHWRNRKK…EKFDAFKETL (225 aa)) the chain is on the cytoplasmic side. Phosphoserine is present on Ser-601. A disordered region spans residues 719-769 (SCSSGQAQYDTPKGGKPAAAPEELVYQVPQSTQEASGAGRDEKFDAFKETL). The segment covering 757–769 (GRDEKFDAFKETL) has biased composition (basic and acidic residues).

The protein localises to the membrane. This Rattus norvegicus (Rat) protein is Discoidin, CUB and LCCL domain-containing protein 2 (Dcbld2).